The following is a 291-amino-acid chain: uncharacterized protein (291 aa).

A run of 10 helical transmembrane segments spans residues 5-23 (ILLSLSASVLFGYLYYFST), 33-52 (IFGFRIIFTLPFVIAAVFLF), 69-91 (PLLIFGFLFNSAMMGIQIWLFLW), 101-120 (VSFGYLLLPLTMVLVGRLVF), 127-144 (VKFLAVVIAAIGVFSNIL), 148-165 (GLSWEALLVSFGYSTYFA), 172-194 (INDLAGFCLEMSLLLPVCIYFAW), 209-228 (LLLLVLLGLISGVALNTYIV), 235-257 (INVLGLLGYAEPIMMLFVSFLIG), and 262-284 (SETIPLFICLMISMILFMSEGLV).

This sequence belongs to the EamA transporter family.

The protein resides in the cell membrane. This is an uncharacterized protein from Pasteurella multocida (strain Pm70).